The primary structure comprises 239 residues: Pyridoxine 5'-phosphate synthase (239 aa).

Residue N7 coordinates 3-amino-2-oxopropyl phosphate. D9 to H10 contributes to the 1-deoxy-D-xylulose 5-phosphate binding site. Position 18 (R18) interacts with 3-amino-2-oxopropyl phosphate. The Proton acceptor role is filled by H43. 1-deoxy-D-xylulose 5-phosphate contacts are provided by R45 and H50. E70 functions as the Proton acceptor in the catalytic mechanism. Position 100 (T100) interacts with 1-deoxy-D-xylulose 5-phosphate. Catalysis depends on H191, which acts as the Proton donor. Residues G192 and G213–H214 each bind 3-amino-2-oxopropyl phosphate.

Belongs to the PNP synthase family. Homooctamer; tetramer of dimers.

It localises to the cytoplasm. It carries out the reaction 3-amino-2-oxopropyl phosphate + 1-deoxy-D-xylulose 5-phosphate = pyridoxine 5'-phosphate + phosphate + 2 H2O + H(+). It participates in cofactor biosynthesis; pyridoxine 5'-phosphate biosynthesis; pyridoxine 5'-phosphate from D-erythrose 4-phosphate: step 5/5. Catalyzes the complicated ring closure reaction between the two acyclic compounds 1-deoxy-D-xylulose-5-phosphate (DXP) and 3-amino-2-oxopropyl phosphate (1-amino-acetone-3-phosphate or AAP) to form pyridoxine 5'-phosphate (PNP) and inorganic phosphate. The chain is Pyridoxine 5'-phosphate synthase from Geobacter sulfurreducens (strain ATCC 51573 / DSM 12127 / PCA).